The following is a 383-amino-acid chain: Putative glutamate--cysteine ligase 2-2 (383 aa).

This sequence belongs to the glutamate--cysteine ligase type 2 family. YbdK subfamily.

It catalyses the reaction L-cysteine + L-glutamate + ATP = gamma-L-glutamyl-L-cysteine + ADP + phosphate + H(+). In terms of biological role, ATP-dependent carboxylate-amine ligase which exhibits weak glutamate--cysteine ligase activity. This is Putative glutamate--cysteine ligase 2-2 from Legionella pneumophila (strain Lens).